Consider the following 90-residue polypeptide: Small ribosomal subunit protein bS16 (90 aa).

The protein belongs to the bacterial ribosomal protein bS16 family.

This Streptococcus thermophilus (strain CNRZ 1066) protein is Small ribosomal subunit protein bS16.